We begin with the raw amino-acid sequence, 505 residues long: Chromosomal replication initiator protein DnaA (505 aa).

The tract at residues 1–90 is domain I, interacts with DnaA modulators; the sequence is MSVELWQQCV…RRSSAPRAAP (90 aa). The tract at residues 91 to 168 is domain II; that stretch reads NAPVSAAVAA…QVEGALKHTS (78 aa). Residues 169 to 385 are domain III, AAA+ region; the sequence is YLNRTFTFDT…GALKRVIAHS (217 aa). Residues Gly213, Gly215, Lys216, and Thr217 each coordinate ATP. A domain IV, binds dsDNA region spans residues 386-505; the sequence is HFMGRDITIE…YKNLLRTLTT (120 aa).

Belongs to the DnaA family. In terms of assembly, oligomerizes as a right-handed, spiral filament on DNA at oriC.

Its subcellular location is the cytoplasm. Its function is as follows. Plays an essential role in the initiation and regulation of chromosomal replication. ATP-DnaA binds to the origin of replication (oriC) to initiate formation of the DNA replication initiation complex once per cell cycle. Binds the DnaA box (a 9 base pair repeat at the origin) and separates the double-stranded (ds)DNA. Forms a right-handed helical filament on oriC DNA; dsDNA binds to the exterior of the filament while single-stranded (ss)DNA is stabiized in the filament's interior. The ATP-DnaA-oriC complex binds and stabilizes one strand of the AT-rich DNA unwinding element (DUE), permitting loading of DNA polymerase. After initiation quickly degrades to an ADP-DnaA complex that is not apt for DNA replication. Binds acidic phospholipids. In Pseudomonas putida (strain ATCC 700007 / DSM 6899 / JCM 31910 / BCRC 17059 / LMG 24140 / F1), this protein is Chromosomal replication initiator protein DnaA.